The sequence spans 273 residues: Nitrogenase iron protein (273 aa).

An ATP-binding site is contributed by Gly8–Ser15. Cys94 contributes to the [4Fe-4S] cluster binding site. Arg97 carries the post-translational modification ADP-ribosylarginine; by dinitrogenase reductase ADP-ribosyltransferase. Cys130 contacts [4Fe-4S] cluster.

The protein belongs to the NifH/BchL/ChlL family. In terms of assembly, homodimer. [4Fe-4S] cluster serves as cofactor. In terms of processing, the reversible ADP-ribosylation of Arg-97 inactivates the nitrogenase reductase and regulates nitrogenase activity.

The enzyme catalyses N2 + 8 reduced [2Fe-2S]-[ferredoxin] + 16 ATP + 16 H2O = H2 + 8 oxidized [2Fe-2S]-[ferredoxin] + 2 NH4(+) + 16 ADP + 16 phosphate + 6 H(+). Its function is as follows. The key enzymatic reactions in nitrogen fixation are catalyzed by the nitrogenase complex, which has 2 components: the iron protein and the molybdenum-iron protein. In Desulforapulum autotrophicum (strain ATCC 43914 / DSM 3382 / VKM B-1955 / HRM2) (Desulfobacterium autotrophicum), this protein is Nitrogenase iron protein.